A 529-amino-acid chain; its full sequence is Peptide chain release factor 3 (529 aa).

The 269-residue stretch at 11–279 (AKRRTFAIIS…GLVDWAPKPQ (269 aa)) folds into the tr-type G domain. GTP-binding positions include 20 to 27 (SHPDAGKT), 88 to 92 (DTPGH), and 142 to 145 (NKLD).

This sequence belongs to the TRAFAC class translation factor GTPase superfamily. Classic translation factor GTPase family. PrfC subfamily.

The protein localises to the cytoplasm. Functionally, increases the formation of ribosomal termination complexes and stimulates activities of RF-1 and RF-2. It binds guanine nucleotides and has strong preference for UGA stop codons. It may interact directly with the ribosome. The stimulation of RF-1 and RF-2 is significantly reduced by GTP and GDP, but not by GMP. The chain is Peptide chain release factor 3 from Idiomarina loihiensis (strain ATCC BAA-735 / DSM 15497 / L2-TR).